Here is a 75-residue protein sequence, read N- to C-terminus: Small ribosomal subunit protein bS18c (75 aa).

Residues 1–12 (MNKSKRSFRRRL) show a composition bias toward basic residues. Positions 1–21 (MNKSKRSFRRRLPPIGSRDQI) are disordered.

It belongs to the bacterial ribosomal protein bS18 family. In terms of assembly, part of the 30S ribosomal subunit.

Its subcellular location is the plastid. It is found in the chloroplast. The chain is Small ribosomal subunit protein bS18c from Cycas taitungensis (Prince sago).